The following is a 221-amino-acid chain: MSNKINIAIDGPCGAGKSTVAKEVSKKLKYVFINSGSVYRAIALSAIQMGVDFEVENEVFKMLSEIEIDLDEHENIFLNGENVSETIRDDKVAKAASKVAQYPLIRHYVVDFIHKITKKSKGYIMDGRDTTFKLMPHAELKIFLTGTPEVRARRRALENKDKGFETNYDVVLAEVKARDYADQHRETDPLHITDDAIVIDSTDMNFEQVVDKIVSLAKERM.

11 to 19 (GPCGAGKST) contacts ATP.

It belongs to the cytidylate kinase family. Type 1 subfamily.

It localises to the cytoplasm. The catalysed reaction is CMP + ATP = CDP + ADP. The enzyme catalyses dCMP + ATP = dCDP + ADP. This Mycoplasmopsis agalactiae (strain NCTC 10123 / CIP 59.7 / PG2) (Mycoplasma agalactiae) protein is Cytidylate kinase.